The chain runs to 331 residues: ADP,ATP carrier protein 1, mitochondrial (331 aa).

Solcar repeat units lie at residues 29–122, 134–226, and 238–320; these read KNFA…FKRM, KWFG…LKPV, and ASFA…LQIL. A run of 5 helical transmembrane segments spans residues 31–58, 99–123, 132–152, 202–223, and 237–257; these read FAID…VKLL, TANV…KRMF, YWKW…SSLF, FNIS…YDSL, and FASF…SYPI. 2 residues coordinate ADP: R104 and K116. R261 contacts ADP. The interval 261–266 is important for transport activity; that stretch reads RRRMMM. The Nucleotide carrier signature motif signature appears at 261-266; the sequence is RRRMMM. Residues 297–317 form a helical membrane-spanning segment; that stretch reads AGANILRAIAGAGVLSGYDQL.

This sequence belongs to the mitochondrial carrier (TC 2.A.29) family. In terms of assembly, monomer.

The protein localises to the mitochondrion inner membrane. The catalysed reaction is ADP(in) + ATP(out) = ADP(out) + ATP(in). With respect to regulation, the matrix-open state (m-state) is inhibited by the membrane-permeable bongkrekic acid (BKA). The cytoplasmic-open state (c-state) is inhibited by the membrane-impermeable toxic inhibitor carboxyatractyloside (CATR). Functionally, ADP:ATP antiporter that mediates import of ADP into the mitochondrial matrix for ATP synthesis, and export of ATP out to fuel the cell. Cycles between the cytoplasmic-open state (c-state) and the matrix-open state (m-state): operates by the alternating access mechanism with a single substrate-binding site intermittently exposed to either the cytosolic (c-state) or matrix (m-state) side of the inner mitochondrial membrane. This is ADP,ATP carrier protein 1, mitochondrial (ANT-G1) from Triticum aestivum (Wheat).